The following is a 562-amino-acid chain: DNA ligase (562 aa).

Glu252 provides a ligand contact to ATP. Lys254 acts as the N6-AMP-lysine intermediate in catalysis. ATP contacts are provided by Arg259, Arg274, Glu303, Phe343, Arg419, and Lys425.

The protein belongs to the ATP-dependent DNA ligase family. The cofactor is Mg(2+).

The enzyme catalyses ATP + (deoxyribonucleotide)n-3'-hydroxyl + 5'-phospho-(deoxyribonucleotide)m = (deoxyribonucleotide)n+m + AMP + diphosphate.. DNA ligase that seals nicks in double-stranded DNA during DNA replication, DNA recombination and DNA repair. This chain is DNA ligase, found in Methanococcus aeolicus (strain ATCC BAA-1280 / DSM 17508 / OCM 812 / Nankai-3).